Here is an 872-residue protein sequence, read N- to C-terminus: Leucine--tRNA ligase (872 aa).

The short motif at 42–52 (PYPSGNLHMGH) is the 'HIGH' region element. A 'KMSKS' region motif is present at residues 631–635 (KMSKS). K634 is a binding site for ATP.

It belongs to the class-I aminoacyl-tRNA synthetase family.

The protein localises to the cytoplasm. It carries out the reaction tRNA(Leu) + L-leucine + ATP = L-leucyl-tRNA(Leu) + AMP + diphosphate. This chain is Leucine--tRNA ligase, found in Blochmanniella pennsylvanica (strain BPEN).